The chain runs to 257 residues: Short chain dehydrogenase prhI (257 aa).

A helical transmembrane segment spans residues 7–29 (HVVIITGSSSGIGLAASTLALAS). I11 lines the NADP(+) pocket. N-linked (GlcNAc...) asparagine glycosylation is present at N50. D57 contacts NADP(+). N92 and N110 each carry an N-linked (GlcNAc...) asparagine glycan. R119, Y151, K155, and V184 together coordinate NADP(+). Residue Y151 is the Proton acceptor of the active site. The Lowers pKa of active site Tyr role is filled by K155.

The protein belongs to the short-chain dehydrogenases/reductases (SDR) family.

The protein localises to the membrane. It carries out the reaction protoaustinoid A + A = protoaustinoid B + AH2. Its pathway is secondary metabolite biosynthesis; terpenoid biosynthesis. Functionally, short chain dehydrogenase; part of the gene cluster that mediates the biosynthesis of paraherquonin, a meroterpenoid with a unique, highly congested hexacyclic molecular architecture. The first step of the pathway is the synthesis of 3,5-dimethylorsellinic acid (DMOA) by the polyketide synthase prhL. Synthesis of DMOA is followed by farnesylation by the prenyltransferase prhE, methylesterification by the methyl-transferase prhM, epoxidation of the prenyl chain by the flavin-dependent monooxygenase prhF, and cyclization of the farnesyl moiety by the terpene cyclase prhH, to yield the tetracyclic intermediate, protoaustinoid A. The short chain dehydrogenase prhI then oxidizes the C-3 alcohol group of the terpene cyclase product to transform protoaustinoid A into protoaustinoid B. The FAD-binding monooxygenase prhJ catalyzes the oxidation of protoaustinoid B into preaustinoid A which is further oxidized into preaustinoid A1 by FAD-binding monooxygenase phrK. Finally, prhA leads to berkeleydione via the berkeleyone B intermediate. PrhA is a multifunctional dioxygenase that first desaturates at C5-C6 to form berkeleyone B, followed by rearrangement of the A/B-ring to form the cycloheptadiene moiety in berkeleydione. Berkeleydione serves as the key intermediate for the biosynthesis of paraherquonin as well as many other meroterpenoids. The cytochrome P450 monooxygenases prhB, prhD, and prhN, as well as the isomerase prhC, are probably involved in the late stage of paraherquonin biosynthesis, after the production of berkeleydione. Especially prhC might be a multifunctional enzyme that catalyzes the D-ring expansion via intramolecular methoxy rearrangement, as well as the hydrolysis of the expanded D-ring. The sequence is that of Short chain dehydrogenase prhI from Penicillium brasilianum.